The sequence spans 769 residues: MMDQARSAFSTLFGGEPLSYTRFSLARQVDGDNSHVEMKLAADEEENVDNNMRDNGASVTKPKRFNGFICYGTIAIILFFLIGFMIGYLGYCKRVEAKSECERPAGTESLEVEGTEPSETEEYFPEAPSHLFWSDLKTMLSEKLSNTEFTSTIRQLNENSYFPREAGSQKDESLAFFIENRFRELQLSKAWHDEHFVKVQVKGSASNSVTIVGTNSGMVYLVESPEGYVAYSKAATVTGRLVHANFGTKKDFENLNSPVNGSLVIVRAGKITFAEKVANAESFNAIGVLIYMDQAKFPITNAEIPFFGHAHLGTGDPYTPGFPSFNHTQFPPSQSSGLPNIPVQTISRANAEKLFGNMEGDCPSAWETDSSCRLETSRNWNVKLSVNNVLKEIRIFNVFGVIKGFEEPDHYVVVGAQRDAWGPGAAKSSVGTALLLELARILSDMVLKGGFKPSRSIVFASWSAGDFGAVGATEWLEGYLSSLHLKAFTYINLDKAVLGTSNFKVSASPLLYSLIEKVMKDVKHPVTGQSLYRDSNWINKVEKFSLDNAAFPFLAYSGIPAVSFCFCEDTDYPYLGTTMDVYEKLIQKVPQLNKMARAAAEVAGQLIMKLTYDLELNLNYEMYNDKILSFVRDVSRFRADIKEMGLNLQWLYSARGDFFRATSRLTTDYRNAERTNRFIMRDINDRIMRVEYHFLSPYVSPRESPFRHIFWGTGSHTLSALLEHLKLRQENISAFNETLFRNQLALTTWTIQGAANALSGDIWDIDNEF.

Residues 1–70 (MMDQARSAFS…KPKRFNGFIC (70 aa)) lie on the Cytoplasmic side of the membrane. The segment at 1-70 (MMDQARSAFS…KPKRFNGFIC (70 aa)) is mediates interaction with SH3BP4. 2 positions are modified to phosphoserine: Ser-10 and Ser-19. Tyr-20 carries the phosphotyrosine modification. An Endocytosis signal motif is present at residues 20 to 23 (YTRF). Thr-21 carries the post-translational modification Phosphothreonine. Ser-24 is modified (phosphoserine). The Stop-transfer sequence motif lies at 61-64 (KPKR). Cys-70 carries the S-palmitoyl cysteine lipid modification. A helical; Signal-anchor for type II membrane protein membrane pass occupies residues 71–91 (YGTIAIILFFLIGFMIGYLGY). Topologically, residues 92-769 (CKRVEAKSEC…GDIWDIDNEF (678 aa)) are extracellular. Thr-107 carries O-linked (GalNAc...) threonine glycosylation. Residues 232–322 (SKAATVTGRL…GTGDPYTPGF (91 aa)) enclose the PA domain. 2 N-linked (GlcNAc...) asparagine glycosylation sites follow: Asn-260 and Asn-326. Positions 578–769 (TMDVYEKLIQ…GDIWDIDNEF (192 aa)) are ligand-binding. The Cell attachment site signature appears at 655–657 (RGD). N-linked (GlcNAc...) asparagine glycans are attached at residues Asn-731 and Asn-736.

This sequence belongs to the peptidase M28 family. M28B subfamily. Homodimer; disulfide-linked. Binds one transferrin molecule per subunit. Interacts with SH3BP4. Homodimer; disulfide-linked. Binds one transferrin or HFE molecule per subunit. Binds the HLA class II histocompatibility antigen, DR1. Interacts with SH3BP3. Interacts with STEAP3; facilitates TFRC endocytosis in erythroid precursor cells. Post-translationally, stearoylated by ZDHHC6 which inhibits TFRC-mediated activation of the JNK pathway and promotes mitochondrial fragmentation. Stearoylation does not affect iron uptake. In terms of processing, N- and O-glycosylated, phosphorylated and palmitoylated.

It is found in the cell membrane. Its subcellular location is the melanosome. Functionally, cellular uptake of iron occurs via receptor-mediated endocytosis of ligand-occupied transferrin receptor into specialized endosomes. Endosomal acidification leads to iron release. The apotransferrin-receptor complex is then recycled to the cell surface with a return to neutral pH and the concomitant loss of affinity of apotransferrin for its receptor. Transferrin receptor is necessary for development of erythrocytes and the nervous system. Positively regulates T and B cell proliferation through iron uptake. Acts as a lipid sensor that regulates mitochondrial fusion by regulating activation of the JNK pathway. When dietary levels of stearate (C18:0) are low, promotes activation of the JNK pathway, resulting in HUWE1-mediated ubiquitination and subsequent degradation of the mitofusin MFN2 and inhibition of mitochondrial fusion. When dietary levels of stearate (C18:0) are high, TFRC stearoylation inhibits activation of the JNK pathway and thus degradation of the mitofusin MFN2. Mediates uptake of NICOL1 into fibroblasts where it may regulate extracellular matrix production. The sequence is that of Transferrin receptor protein 1 (TFRC) from Felis catus (Cat).